The sequence spans 333 residues: Tetraacyldisaccharide 4'-kinase (333 aa).

Residue 60–67 participates in ATP binding; the sequence is TVGGTGKT.

The protein belongs to the LpxK family.

The enzyme catalyses a lipid A disaccharide + ATP = a lipid IVA + ADP + H(+). Its pathway is glycolipid biosynthesis; lipid IV(A) biosynthesis; lipid IV(A) from (3R)-3-hydroxytetradecanoyl-[acyl-carrier-protein] and UDP-N-acetyl-alpha-D-glucosamine: step 6/6. Functionally, transfers the gamma-phosphate of ATP to the 4'-position of a tetraacyldisaccharide 1-phosphate intermediate (termed DS-1-P) to form tetraacyldisaccharide 1,4'-bis-phosphate (lipid IVA). The polypeptide is Tetraacyldisaccharide 4'-kinase (Pseudomonas putida (strain GB-1)).